Here is a 195-residue protein sequence, read N- to C-terminus: Protein GrpE (195 aa).

The disordered stretch occupies residues 1-60 (MAKDEEKNSQASAAPNEGEVKAKQEQTSAKEPAAKAGETEKVADLQKQVEELTKQLDDQK). Residues 37-60 (GETEKVADLQKQVEELTKQLDDQK) are compositionally biased toward basic and acidic residues.

It belongs to the GrpE family. As to quaternary structure, homodimer.

The protein resides in the cytoplasm. In terms of biological role, participates actively in the response to hyperosmotic and heat shock by preventing the aggregation of stress-denatured proteins, in association with DnaK and GrpE. It is the nucleotide exchange factor for DnaK and may function as a thermosensor. Unfolded proteins bind initially to DnaJ; upon interaction with the DnaJ-bound protein, DnaK hydrolyzes its bound ATP, resulting in the formation of a stable complex. GrpE releases ADP from DnaK; ATP binding to DnaK triggers the release of the substrate protein, thus completing the reaction cycle. Several rounds of ATP-dependent interactions between DnaJ, DnaK and GrpE are required for fully efficient folding. In Limosilactobacillus fermentum (strain NBRC 3956 / LMG 18251) (Lactobacillus fermentum), this protein is Protein GrpE.